Here is a 432-residue protein sequence, read N- to C-terminus: C-type cytochrome OmcS (432 aa).

Residues 1–25 (MKKGMKVSLSVAAAALLMSAPAAFA) form the signal peptide.

The cofactor is heme.

Its subcellular location is the cell outer membrane. The protein localises to the cell surface. In terms of biological role, plays an important role in extracellular electron transfer. Can transfer electrons to insoluble Fe(3+) oxides as well as other extracellular electron acceptors, including Mn(4+) oxide and humic substances. Essential for direct interspecies electron transfer (DIET) in cocultures with G.metallireducens. The chain is C-type cytochrome OmcS from Geobacter sulfurreducens (strain ATCC 51573 / DSM 12127 / PCA).